The sequence spans 325 residues: Beta-ketoacyl-[acyl-carrier-protein] synthase III 2 (325 aa).

Residues Cys113 and His250 contribute to the active site. The ACP-binding stretch occupies residues 251-255; the sequence is SANLR. Asn280 is an active-site residue.

This sequence belongs to the thiolase-like superfamily. FabH family. As to quaternary structure, homodimer.

Its subcellular location is the cytoplasm. The enzyme catalyses 3-methylbutanoyl-CoA + malonyl-[ACP] + H(+) = 5-methyl-3-oxohexanoyl-[ACP] + CO2 + CoA. The catalysed reaction is 2-methylpropanoyl-CoA + malonyl-[ACP] + H(+) = 4-methyl-3-oxopentanoyl-[ACP] + CO2 + CoA. It carries out the reaction (2S)-2-methylbutanoyl-CoA + malonyl-[ACP] + H(+) = (4S)-4-methyl-3-oxohexanoyl-[ACP] + CO2 + CoA. It catalyses the reaction malonyl-[ACP] + acetyl-CoA + H(+) = 3-oxobutanoyl-[ACP] + CO2 + CoA. The enzyme catalyses malonyl-[ACP] + propanoyl-CoA + H(+) = 3-oxopentanoyl-[ACP] + CO2 + CoA. The catalysed reaction is butanoyl-CoA + malonyl-[ACP] + H(+) = 3-oxohexanoyl-[ACP] + CO2 + CoA. It carries out the reaction pentanoyl-CoA + malonyl-[ACP] + H(+) = 3-oxoheptanoyl-[ACP] + CO2 + CoA. It catalyses the reaction hexanoyl-CoA + malonyl-[ACP] + H(+) = 3-oxooctanoyl-[ACP] + CO2 + CoA. The enzyme catalyses heptanoyl-CoA + malonyl-[ACP] + H(+) = 3-oxononanoyl-[ACP] + CO2 + CoA. Its pathway is lipid metabolism; fatty acid biosynthesis. Catalyzes the condensation reaction of fatty acid synthesis by the addition to an acyl acceptor of two carbons from malonyl-ACP. Catalyzes the first condensation reaction which initiates fatty acid synthesis and may therefore play a role in governing the total rate of fatty acid production. Possesses both acetoacetyl-ACP synthase and acetyl transacylase activities. Has some substrate specificity for branched chain acyl-CoA, determining the biosynthesis of branched-chain of fatty acids instead of straight-chain. The chain is Beta-ketoacyl-[acyl-carrier-protein] synthase III 2 from Bacillus subtilis (strain 168).